The sequence spans 1023 residues: RTX-I toxin determinant A from serotypes 1/9 (1023 aa).

3 consecutive transmembrane segments (helical) span residues 226-256 (NNLP…ILSN), 297-326 (STTA…ADKF), and 367-406 (INSV…SGIL). 6 Hemolysin-type calcium-binding repeats span residues 730–747 (FGSR…DDEI), 748–765 (YGND…NDVI), 766–783 (HGGD…NDRL), 784–801 (IGGK…DDEL), 812–829 (LGGA…TNLF), and 830–847 (DGGV…KDIY).

It belongs to the RTX prokaryotic toxin (TC 1.C.11) family. Post-translationally, palmitoylated by ApxIC. The toxin only becomes active when modified.

It localises to the secreted. It is found in the host cell membrane. Functionally, one of the virulence factors of A.pleuropneumoniae, which has a strong hemolytic activity and is cytotoxic for alveolar macrophages and neutrophils. This Actinobacillus pleuropneumoniae (Haemophilus pleuropneumoniae) protein is RTX-I toxin determinant A from serotypes 1/9 (apxIA).